The chain runs to 100 residues: MHLTAREQEKLLIVVAADVARRRKERGVKLNHPEAVAYITAELMEGARDGKTVAELMSEGQQYLTRDDVMEGVPEMISDVQVEATFPDGTKLVTVHNPIR.

It belongs to the urease gamma subunit family. In terms of assembly, heterotrimer of UreA (gamma), UreB (beta) and UreC (alpha) subunits. Three heterotrimers associate to form the active enzyme.

The protein localises to the cytoplasm. The enzyme catalyses urea + 2 H2O + H(+) = hydrogencarbonate + 2 NH4(+). It functions in the pathway nitrogen metabolism; urea degradation; CO(2) and NH(3) from urea (urease route): step 1/1. The polypeptide is Urease subunit gamma (Corynebacterium urealyticum (strain ATCC 43042 / DSM 7109)).